A 278-amino-acid polypeptide reads, in one-letter code: Putative glycosyltransferase EpsE (278 aa).

Belongs to the glycosyltransferase 2 family.

In terms of biological role, may be involved in the production of the exopolysaccharide (EPS) component of the extracellular matrix during biofilm formation. EPS is responsible for the adhesion of chains of cells into bundles. Required for biofilm maintenance. The protein is Putative glycosyltransferase EpsE (epsE) of Bacillus subtilis (strain 168).